Here is a 346-residue protein sequence, read N- to C-terminus: fMet-Leu-Phe receptor (346 aa).

N-linked (GlcNAc...) asparagine glycosylation is found at Asn1 and Asn7. Over 1–24 the chain is Extracellular; that stretch reads NSSLPTNISGGTPAVSAGYLFLDI. The chain crosses the membrane as a helical span at residues 25 to 47; the sequence is ITYLVYAVTFVLGVLGNGLVIWV. Residues 48 to 58 lie on the Cytoplasmic side of the membrane; the sequence is AGFRMTHTVTT. The helical transmembrane segment at 59–80 threads the bilayer; sequence ISYLNLAVADFCFTSTLPFFMV. Topologically, residues 81-97 are extracellular; it reads RKAMGGHWPFGWFLCKF. Cys95 and Cys173 form a disulfide bridge. A helical membrane pass occupies residues 98-118; sequence IFTIVDINLFGSVFLIALIAL. Topologically, residues 119–137 are cytoplasmic; the sequence is DRCVCVLHPVWTQNHRTVS. A helical membrane pass occupies residues 138–159; that stretch reads LAKKVIIGPWVMALLLTLPVII. The Extracellular portion of the chain corresponds to 160-202; sequence RVTTVPGKMGTVSCTFNFSPWTNDPKERIKVAIAMLTVRGIIR. The chain crosses the membrane as a helical span at residues 203-223; sequence FIIGFSAPMSIVAVSYGLIAT. Topologically, residues 224–239 are cytoplasmic; sequence KIHKQGLIKSSRPLRV. The helical transmembrane segment at 240–263 threads the bilayer; sequence LSFVAAAFFLCWSPYQVVAFIATV. The Extracellular segment spans residues 264-282; that stretch reads RIRELLQGMYKEISIAVDV. A helical membrane pass occupies residues 283-302; sequence TSALAFFNSCLNPMLYVFMG. Residues 303-346 lie on the Cytoplasmic side of the membrane; that stretch reads QDFRERLIHSLPASLERALTEASTQTSDTATNSTLPSAEVALQA. The segment covering 324–338 has biased composition (polar residues); the sequence is ASTQTSDTATNSTLP. The segment at 324 to 346 is disordered; it reads ASTQTSDTATNSTLPSAEVALQA.

The protein belongs to the G-protein coupled receptor 1 family. Phosphorylated; which is necessary for desensitization.

The protein resides in the cell membrane. In terms of biological role, high affinity receptor for N-formyl-methionyl peptides (fMLP), which are powerful neutrophil chemotactic factors. Binding of fMLP to the receptor stimulates intracellular calcium mobilization and superoxide anion release. This response is mediated via a G-protein that activates a phosphatidylinositol-calcium second messenger system. Receptor for TAFA4, mediates its effects on chemoattracting macrophages, promoting phagocytosis and increasing ROS release. Receptor for cathepsin CTSG, leading to increased phagocyte chemotaxis. This is fMet-Leu-Phe receptor (FPR1) from Pongo pygmaeus (Bornean orangutan).